The chain runs to 318 residues: Cytochrome f (318 aa).

The N-terminal stretch at 1-32 (MQNKNNYNWLKEWVIRSFLLLTLLTWPSVSNA) is a signal peptide. Heme contacts are provided by tyrosine 33, cysteine 53, cysteine 56, and histidine 57. A helical membrane pass occupies residues 284 to 304 (IQGLLLFFASVVLAQIFLVLK).

This sequence belongs to the cytochrome f family. In terms of assembly, the 4 large subunits of the cytochrome b6-f complex are cytochrome b6, subunit IV (17 kDa polypeptide, petD), cytochrome f and the Rieske protein, while the 4 small subunits are PetG, PetL, PetM and PetN. The complex functions as a dimer. The cofactor is heme.

Its subcellular location is the plastid. The protein resides in the chloroplast thylakoid membrane. Component of the cytochrome b6-f complex, which mediates electron transfer between photosystem II (PSII) and photosystem I (PSI), cyclic electron flow around PSI, and state transitions. The protein is Cytochrome f of Angiopteris evecta (Mule's foot fern).